Consider the following 308-residue polypeptide: Very-long-chain enoyl-CoA reductase (308 aa).

Topologically, residues 1–86 (MKHYEVEIRD…YFRDLGAQIS (86 aa)) are cytoplasmic. N6-acetyllysine is present on Lys-22. Ser-58 carries the post-translational modification Phosphoserine. Lys-60 carries the N6-acetyllysine modification. Residues 87 to 106 (WVTVFLTEYAGPLFIYLLFY) traverse the membrane as a helical segment. Topologically, residues 107 to 124 (FRVPFIYGRKYDFTSSRH) are lumenal. A helical membrane pass occupies residues 125–147 (TVVHLACMCHSFHYIKRLLETLF). The Cytoplasmic portion of the chain corresponds to 148-158 (VHRFSHGTMPL). A helical membrane pass occupies residues 159 to 180 (RNIFKNCTYYWGFAAWMAYYIN). At 181–189 (HPLYTPPTY) the chain is on the lumenal side. The chain crosses the membrane as a helical span at residues 190-216 (GVQQVKLALAVFVICQLGNFSIHMALR). Residues 217-245 (DLRPAGSKTRKIPYPTKNPFTWLFLLVSC) lie on the Cytoplasmic side of the membrane. The chain crosses the membrane as a helical span at residues 246–262 (PNYTYEVGSWIGFAILT). At 263-264 (QC) the chain is on the lumenal side. The chain crosses the membrane as a helical span at residues 265-292 (VPVALFSLVGFTQMTIWAKGKHRSYLKE). Topologically, residues 293 to 308 (FRDYPPLRMPIIPFLL) are cytoplasmic.

It belongs to the steroid 5-alpha reductase family. As to quaternary structure, interacts with ELOVL1 and LASS2. Glycosylated.

It localises to the endoplasmic reticulum membrane. The catalysed reaction is a very-long-chain 2,3-saturated fatty acyl-CoA + NADP(+) = a very-long-chain (2E)-enoyl-CoA + NADPH + H(+). It carries out the reaction octadecanoyl-CoA + NADP(+) = (2E)-octadecenoyl-CoA + NADPH + H(+). It catalyses the reaction (2E,7Z,10Z,13Z,16Z)-docosapentaenoyl-CoA + NADPH + H(+) = (7Z,10Z,13Z,16Z)-docosatetraenoyl-CoA + NADP(+). The enzyme catalyses (2E,7Z,10Z,13Z,16Z,19Z)-docosahexaenoyl-CoA + NADPH + H(+) = (7Z,10Z,13Z,16Z,19Z)-docosapentaenoyl-CoA + NADP(+). The catalysed reaction is (2E,8Z,11Z,14Z)-eicosatetraenoyl-CoA + NADPH + H(+) = (8Z,11Z,14Z)-eicosatrienoyl-CoA + NADP(+). It carries out the reaction (2E)-hexadecenoyl-CoA + NADPH + H(+) = hexadecanoyl-CoA + NADP(+). Its pathway is lipid metabolism; fatty acid biosynthesis. It functions in the pathway lipid metabolism; sphingolipid metabolism. In terms of biological role, involved in both the production of very long-chain fatty acids for sphingolipid synthesis and the degradation of the sphingosine moiety in sphingolipids through the sphingosine 1-phosphate metabolic pathway. Catalyzes the last of the four reactions of the long-chain fatty acids elongation cycle. This endoplasmic reticulum-bound enzymatic process, allows the addition of 2 carbons to the chain of long- and very long-chain fatty acids/VLCFAs per cycle. This enzyme reduces the trans-2,3-enoyl-CoA fatty acid intermediate to an acyl-CoA that can be further elongated by entering a new cycle of elongation. Thereby, it participates in the production of VLCFAs of different chain lengths that are involved in multiple biological processes as precursors of membrane lipids and lipid mediators. Catalyzes the saturation step of the sphingosine 1-phosphate metabolic pathway, the conversion of trans-2-hexadecenoyl-CoA to palmitoyl-CoA. The sequence is that of Very-long-chain enoyl-CoA reductase (Tecr) from Mus musculus (Mouse).